Reading from the N-terminus, the 2537-residue chain is Histone-lysine N-methyltransferase SETD2 (2537 aa).

A compositionally biased stretch (pro residues) spans Met-1 to Lys-12. Disordered stretches follow at residues Met-1 to Ala-31, Thr-91 to Arg-142, Pro-156 to Arg-483, Tyr-510 to Arg-554, and Ser-607 to Lys-629. Positions Asp-18–Ala-31 are enriched in basic and acidic residues. Polar residues predominate over residues Thr-91–Asn-103. Ser-132 carries the phosphoserine modification. Residues Pro-156–Ser-166 show a composition bias toward low complexity. Over residues Pro-187–Pro-205 the composition is skewed to pro residues. The residue at position 242 (Ser-242) is a Phosphoserine. Over residues Leu-264–Glu-291 the composition is skewed to basic and acidic residues. Ser-322, Ser-324, and Ser-345 each carry phosphoserine. Composition is skewed to basic and acidic residues over residues Arg-336–Arg-401, Arg-422–Arg-433, Pro-440–Lys-468, and Tyr-510–Lys-528. A Glycyl lysine isopeptide (Lys-Gly) (interchain with G-Cter in SUMO2) cross-link involves residue Lys-360. Residue Ser-423 is modified to Phosphoserine. A phosphoserine mark is found at Ser-532, Ser-614, and Ser-624. Positions Gly-613 to Pro-625 are enriched in polar residues. Phosphothreonine is present on Thr-626. Ser-633 bears the Phosphoserine mark. Lys-637 is covalently cross-linked (Glycyl lysine isopeptide (Lys-Gly) (interchain with G-Cter in SUMO2)). 4 positions are modified to phosphoserine: Ser-697, Ser-707, Ser-743, and Ser-753. The tract at residues Arg-729–Glu-749 is disordered. A Glycyl lysine isopeptide (Lys-Gly) (interchain with G-Cter in SUMO2) cross-link involves residue Lys-775. 4 disordered regions span residues Cys-829–Asp-894, Gln-941–Asp-974, Glu-1015–Asp-1078, and Ala-1135–Pro-1185. Positions Asp-830–Lys-847 are enriched in basic and acidic residues. The span at Ser-849–His-858 shows a compositional bias: polar residues. The span at Pro-867–Ile-883 shows a compositional bias: low complexity. Residues Leu-951 to Asp-974 show a composition bias toward basic and acidic residues. Over residues Asp-1026 to Asp-1037 the composition is skewed to acidic residues. Ser-1077 is subject to Phosphoserine. The segment covering Ser-1150–Arg-1165 has biased composition (basic and acidic residues). Ser-1201 carries the phosphoserine modification. Disordered stretches follow at residues Gly-1232–Thr-1254, Trp-1280–Ile-1346, and Asn-1366–Gln-1396. Composition is skewed to polar residues over residues Phe-1235–Thr-1254 and Arg-1319–Asn-1329. Residues Asn-1366–Pro-1377 show a composition bias toward basic and acidic residues. 3 positions are modified to phosphoserine: Ser-1387, Ser-1389, and Ser-1391. Residues Asp-1392–Ser-1688 are interaction with TUBA1A. An AWS domain is found at Ile-1468 to Gln-1522. Cys-1473, Cys-1475, Cys-1490, Cys-1494, Cys-1503, Cys-1507, and Cys-1513 together coordinate Zn(2+). The 118-residue stretch at Ala-1524 to Gln-1641 folds into the SET domain. S-adenosyl-L-methionine contacts are provided by residues Lys-1534 to Trp-1536, His-1577 to Tyr-1579, and Asn-1602 to His-1603. A Zn(2+)-binding site is contributed by Cys-1605. In terms of domain architecture, Post-SET spans Glu-1648–Gly-1664. Residue Gln-1650 coordinates S-adenosyl-L-methionine. Cys-1652 lines the Zn(2+) pocket. Position 1653 (Phe-1653) interacts with S-adenosyl-L-methionine. The Zn(2+) site is built by Cys-1654 and Cys-1659. A phosphoserine mark is found at Ser-1670, Ser-1818, and Ser-1819. A disordered region spans residues Thr-1806–Lys-1848. Polar residues predominate over residues Ser-1818–Asp-1833. Phosphothreonine is present on residues Thr-1827 and Thr-1846. Phosphoserine is present on residues Ser-1862 and Ser-1926. 2 disordered regions span residues Ser-1914–Asp-1981 and Leu-1993–Gln-2110. Over residues Thr-1934–Glu-1946 the composition is skewed to basic and acidic residues. The span at Thr-1947–Val-1964 shows a compositional bias: acidic residues. Ser-1954, Ser-1962, and Ser-1969 each carry phosphoserine. 3 stretches are compositionally biased toward basic and acidic residues: residues Glu-1965–Asp-1978, Leu-1993–Ala-2020, and Arg-2032–Lys-2045. Residues Ser-2053 and Ser-2055 each carry the phosphoserine modification. Basic and acidic residues-rich tracts occupy residues Arg-2063–Asp-2073 and Lys-2084–Gln-2108. Residues Ser-2090–Met-2119 are a coiled coil. The segment at Gln-2110–Pro-2339 is low charge region. A WW domain is found at Ile-2362–Trp-2395. Residues Leu-2412 to Glu-2438 form a disordered region. An interaction with POLR2A region spans residues Thr-2430 to Glu-2537.

Belongs to the class V-like SAM-binding methyltransferase superfamily. Histone-lysine methyltransferase family. SET2 subfamily. In terms of assembly, specifically interacts with hyperphosphorylated C-terminal domain (CTD) of RNA polymerase II large subunit (POLR2A): binds to CTD heptad repeats doubly phosphorylated on 'Ser-2' and 'Ser-5' of each heptad. Interacts with HTT. Interacts with IWS1. Interacts with p53/TP53; leading to regulate p53/TP53 target genes. Component of a complex with HNRNPL. Interacts with TUBA1A; the interaction is independent on alpha-tubulin acetylation on 'Lys-40'. In terms of processing, may be automethylated.

Its subcellular location is the nucleus. The protein localises to the chromosome. It catalyses the reaction L-lysyl(36)-[histone H3] + 3 S-adenosyl-L-methionine = N(6),N(6),N(6)-trimethyl-L-lysyl(36)-[histone H3] + 3 S-adenosyl-L-homocysteine + 3 H(+). It carries out the reaction L-lysyl-[protein] + S-adenosyl-L-methionine = N(6)-methyl-L-lysyl-[protein] + S-adenosyl-L-homocysteine + H(+). The enzyme catalyses L-lysyl-[protein] + 3 S-adenosyl-L-methionine = N(6),N(6),N(6)-trimethyl-L-lysyl-[protein] + 3 S-adenosyl-L-homocysteine + 3 H(+). With respect to regulation, specifically inhibited by sinefungin derivatives. Functionally, histone methyltransferase that specifically trimethylates 'Lys-36' of histone H3 (H3K36me3) using dimethylated 'Lys-36' (H3K36me2) as substrate. It is capable of trimethylating unmethylated H3K36 (H3K36me0) in vitro. Represents the main enzyme generating H3K36me3, a specific tag for epigenetic transcriptional activation. Plays a role in chromatin structure modulation during elongation by coordinating recruitment of the FACT complex and by interacting with hyperphosphorylated POLR2A. Acts as a key regulator of DNA mismatch repair in G1 and early S phase by generating H3K36me3, a mark required to recruit MSH6 subunit of the MutS alpha complex: early recruitment of the MutS alpha complex to chromatin to be replicated allows a quick identification of mismatch DNA to initiate the mismatch repair reaction. Required for DNA double-strand break repair in response to DNA damage: acts by mediating formation of H3K36me3, promoting recruitment of RAD51 and DNA repair via homologous recombination (HR). Acts as a tumor suppressor. H3K36me3 also plays an essential role in the maintenance of a heterochromatic state, by recruiting DNA methyltransferase DNMT3A. H3K36me3 is also enhanced in intron-containing genes, suggesting that SETD2 recruitment is enhanced by splicing and that splicing is coupled to recruitment of elongating RNA polymerase. Required during angiogenesis. Required for endoderm development by promoting embryonic stem cell differentiation toward endoderm: acts by mediating formation of H3K36me3 in distal promoter regions of FGFR3, leading to regulate transcription initiation of FGFR3. In addition to histones, also mediates methylation of other proteins, such as tubulins and STAT1. Trimethylates 'Lys-40' of alpha-tubulins such as TUBA1B (alpha-TubK40me3); alpha-TubK40me3 is required for normal mitosis and cytokinesis and may be a specific tag in cytoskeletal remodeling. Involved in interferon-alpha-induced antiviral defense by mediating both monomethylation of STAT1 at 'Lys-525' and catalyzing H3K36me3 on promoters of some interferon-stimulated genes (ISGs) to activate gene transcription. The protein is Histone-lysine N-methyltransferase SETD2 of Mus musculus (Mouse).